Here is a 393-residue protein sequence, read N- to C-terminus: Yellow-related salivary protein SP03B (393 aa).

The N-terminal stretch at 1 to 18 (MKIFLCLIAVVFLQGVVG) is a signal peptide. N-linked (GlcNAc...) asparagine glycosylation occurs at asparagine 29.

This sequence belongs to the major royal jelly protein family. In terms of tissue distribution, female salivary gland (at protein level).

The protein resides in the secreted. Functionally, probably modulates blood feeding of sand flies on vertebrate species by binding and sequestering different mediators involved in the host response. Binds biogenic amines. Binds serotonin with high affinity. Poorly binds histamine. Does not bind dopamine, noradrenaline, adrenaline and octopamine. This Phlebotomus perniciosus (Phlebotomine sand fly) protein is Yellow-related salivary protein SP03B.